The chain runs to 46 residues: Light-harvesting protein B-800/850 beta 1 chain (46 aa).

Over 2-19 the chain is Cytoplasmic; sequence AERSLSGLTEEEAIAVHD. A bacteriochlorophyll contacts are provided by histidine 18 and histidine 36. Residues 20-42 form a helical membrane-spanning segment; that stretch reads QFKTTFSAFIILAAVAHVLVWVW. At 43 to 46 the chain is on the periplasmic side; the sequence is KPWF.

This sequence belongs to the antenna complex beta subunit family. In terms of assembly, the core complex is formed by different alpha and beta chains, binding bacteriochlorophyll molecules, and arranged most probably in tetrameric structures disposed around the reaction center.

The protein localises to the cell inner membrane. Its function is as follows. Antenna complexes are light-harvesting systems, which transfer the excitation energy to the reaction centers. The sequence is that of Light-harvesting protein B-800/850 beta 1 chain (B1) from Magnetospirillum molischianum (Rhodospirillum molischianum).